Here is a 554-residue protein sequence, read N- to C-terminus: Solute carrier family 22 member 1 (554 aa).

Residues 1–24 are Cytoplasmic-facing; that stretch reads MPSVDDVLEQVGEFGWFQKQAFLN. A helical transmembrane segment spans residues 25 to 45; the sequence is LCLTSVAFAPIYVGIVFLGFT. The Extracellular segment spans residues 46–234; that stretch reads PDHRCRSPGV…EFVGLGYRKT (189 aa). N71 carries an N-linked (GlcNAc...) asparagine glycan. The chain crosses the membrane as a helical span at residues 235–255; that stretch reads VAILYQTAFSVGLVLLSGLAY. Residues 256 to 261 lie on the Cytoplasmic side of the membrane; it reads AVPHWR. Residues 262 to 282 traverse the membrane as a helical segment; it reads SLQLAVSLPIFLLLLCYWFVP. A Proline-rich sequence motif is present at residues 282–286; that stretch reads PESPR. Over 283-347 the chain is Extracellular; that stretch reads ESPRWLLSQK…FRTQNLRKYT (65 aa). Position 333 is a phosphoserine (S333). Residues 348–368 form a helical membrane-spanning segment; sequence FILMYLWFTSSVLYQGLIMHV. Topologically, residues 369-376 are cytoplasmic; that stretch reads GATGGSLY. A helical transmembrane segment spans residues 377 to 397; sequence LDFLYSALVEFPAAFVILLII. Over 398-402 the chain is Extracellular; it reads DRFGR. A helical transmembrane segment spans residues 403 to 423; it reads LYLLAGSNLLAGAACFFMIFI. The Cytoplasmic portion of the chain corresponds to 424-431; it reads SHDLHWLS. Residues 432–452 form a helical membrane-spanning segment; the sequence is IVAACIGRMGITIVFQMVCLV. Residues 453-464 lie on the Extracellular side of the membrane; it reads SAELYPTFIRNL. A helical transmembrane segment spans residues 465–485; sequence GVMVCSSLCDLGGVVAPFLVF. The Cytoplasmic portion of the chain corresponds to 486–492; sequence RLTEVWR. The chain crosses the membrane as a helical span at residues 493 to 513; it reads GLPLVLFAALGLVAGGMSLLL. The Extracellular segment spans residues 514-554; it reads PETKGVALPETIEEVERLGRKAKPRDNMIYLQVKMPEPAGL.

Belongs to the major facilitator (TC 2.A.1) superfamily. Organic cation transporter (TC 2.A.1.19) family. Phosphorylated.

Its subcellular location is the basolateral cell membrane. It localises to the apical cell membrane. The protein localises to the lateral cell membrane. It is found in the basal cell membrane. The protein resides in the cell membrane. It carries out the reaction 1-methylnicotinamide(out) = 1-methylnicotinamide(in). It catalyses the reaction dopamine(out) = dopamine(in). The enzyme catalyses serotonin(out) = serotonin(in). The catalysed reaction is (R)-adrenaline(out) = (R)-adrenaline(in). It carries out the reaction (R)-noradrenaline(out) = (R)-noradrenaline(in). It catalyses the reaction histamine(out) = histamine(in). The enzyme catalyses guanidine(out) = guanidine(in). The catalysed reaction is choline(out) = choline(in). It carries out the reaction acetylcholine(in) = acetylcholine(out). It catalyses the reaction thiamine(in) = thiamine(out). The enzyme catalyses spermidine(in) = spermidine(out). The catalysed reaction is agmatine(out) = agmatine(in). It carries out the reaction putrescine(out) = putrescine(in). It catalyses the reaction (R)-carnitine(in) = (R)-carnitine(out). The enzyme catalyses O-isobutanoyl-(R)-carnitine(in) = O-isobutanoyl-(R)-carnitine(out). The catalysed reaction is O-acetyl-(R)-carnitine(in) = O-acetyl-(R)-carnitine(out). It carries out the reaction O-3-hydroxybutanoyl-(R)-carnitine(in) = O-3-hydroxybutanoyl-(R)-carnitine(out). It catalyses the reaction O-propanoyl-(R)-carnitine(in) = O-propanoyl-(R)-carnitine(out). The enzyme catalyses O-butanoyl-(R)-carnitine(in) = O-butanoyl-(R)-carnitine(out). The catalysed reaction is O-2-methylbutanoyl-(R)-carnitine(in) = O-2-methylbutanoyl-(R)-carnitine(out). It carries out the reaction O-3-methylbutanoyl-(R)-carnitine(in) = O-3-methylbutanoyl-(R)-carnitine(out). It catalyses the reaction O-hexanoyl-(R)-carnitine(in) = O-hexanoyl-(R)-carnitine(out). The enzyme catalyses L-histidyl-L-proline diketopiperazine(in) = L-histidyl-L-proline diketopiperazine(out). The catalysed reaction is (R)-salsolinol(in) = (R)-salsolinol(out). It carries out the reaction prostaglandin F2alpha(out) = prostaglandin F2alpha(in). It catalyses the reaction prostaglandin E2(out) = prostaglandin E2(in). With respect to regulation, phosphorylation of the transporter leads to changes in its substrate affinity, resulting in a regulation of the transport activity. In contrast with rat ortholog, ASP uptake is inhibited by protein kinase A (PKA) and C (PKC) activation. ASP uptake is also endogenously activated by calmodulin, the calmodulin-dependent kinase II and LCK tyrosine kinase. Inhibited by cGMP, most likely through a cGMP-binding protein that interacts with OCT1. Functionally, electrogenic voltage-dependent transporter that mediates the transport of a variety of organic cations such as endogenous bioactive amines, cationic drugs and xenobiotics. Functions as a pH- and Na(+)-independent, bidirectional transporter. Cation cellular uptake or release is driven by the electrochemical potential (i.e. membrane potential and concentration gradient) and substrate selectivity. Hydrophobicity is a major requirement for recognition in polyvalent substrates and inhibitors. Primarily expressed in the basolateral membrane of hepatocytes and proximal tubules and involved in the uptake and disposition of cationic compounds from the blood by hepatic and renal clearance. Most likely functions as an uptake carrier in enterocytes contributing to the intestinal elimination of organic cations from the systemic circulation. Transports endogenous monoamines such as N-1-methylnicotinamide (NMN), guanidine, neurotransmitters dopamine, serotonin, noradrenaline, adrenaline and histamine, and quaternary ammonium compound such as choline. Also transports natural polyamines such as spermidine, agmatine and putrescine at low affinity, but relatively high turnover. Involved in the hepatic and intestinal uptake of the vitamin B1/thiamine, hence regulating hepatic lipid and energy metabolism. Contributes to the influx and efflux of fatty acid carriers carnitines and acylcarnitines across the basolateral membrane of hepatocytes, from the liver to the systemic circulation and inversely and may be involved in regulating the systemic availability of hepatic acylcarnitines. Also capable of transporting non-amine endogenous compounds such as prostaglandin E2 (PGE2) and prostaglandin F2-alpha (PGF2-alpha). May contribute to the transport of cationic compounds in testes across the blood-testis-barrier. Also mediates the uptake of xenobiotics tributylmethylammonium (TBuMA), quinidine, N-methyl-quinine (NMQ), N-methyl-quinidine (NMQD) N-(4,4-azo-n-pentyl)-quinuclidine (APQ), azidoprocainamide methoiodide (AMP), N-(4,4-azo-n-pentyl)-21-deoxyajmalinium (APDA) and 4-(4-(dimethylamino)styryl)-N-methylpyridinium (ASP). This Sus scrofa (Pig) protein is Solute carrier family 22 member 1 (SLC22A1).